The primary structure comprises 122 residues: Large ribosomal subunit protein uL14c (122 aa).

Belongs to the universal ribosomal protein uL14 family. Part of the 50S ribosomal subunit.

It is found in the plastid. It localises to the chloroplast. Functionally, binds to 23S rRNA. The sequence is that of Large ribosomal subunit protein uL14c from Vitis vinifera (Grape).